Reading from the N-terminus, the 275-residue chain is Bis(5'-nucleosyl)-tetraphosphatase, symmetrical (275 aa).

Belongs to the Ap4A hydrolase family.

The enzyme catalyses P(1),P(4)-bis(5'-adenosyl) tetraphosphate + H2O = 2 ADP + 2 H(+). In terms of biological role, hydrolyzes diadenosine 5',5'''-P1,P4-tetraphosphate to yield ADP. The sequence is that of Bis(5'-nucleosyl)-tetraphosphatase, symmetrical from Haemophilus influenzae (strain PittEE).